Consider the following 337-residue polypeptide: Heme A synthase (337 aa).

A run of 5 helical transmembrane segments spans residues 6 to 26 (ITKW…IGGI), 87 to 107 (FIHR…LIYF), 119 to 139 (LPYI…WYMV), 154 to 174 (LAFH…QLIK), and 192 to 212 (LIFS…GALV). A heme-binding site is contributed by histidine 256. Transmembrane regions (helical) follow at residues 258-278 (LVGY…LKIE), 285-305 (IAYF…ITLL), and 308-328 (VPII…SIII). Histidine 316 is a heme binding site.

Belongs to the COX15/CtaA family. Type 2 subfamily. In terms of assembly, interacts with CtaB. Requires heme b as cofactor.

The protein localises to the cell membrane. It carries out the reaction Fe(II)-heme o + 2 A + H2O = Fe(II)-heme a + 2 AH2. The protein operates within porphyrin-containing compound metabolism; heme A biosynthesis; heme A from heme O: step 1/1. Its function is as follows. Catalyzes the conversion of heme O to heme A by two successive hydroxylations of the methyl group at C8. The first hydroxylation forms heme I, the second hydroxylation results in an unstable dihydroxymethyl group, which spontaneously dehydrates, resulting in the formyl group of heme A. The protein is Heme A synthase of Rickettsia africae (strain ESF-5).